The sequence spans 131 residues: MTTKRKPYVRPMTSTWWKKLPFYRFYMLREGTAVPAVWFSIELIFGLFALKNGPDAWAGFVDFLQNPVIVIINLITLAAALLHTKTWFELAPKAANIIVKDEKMGPEPIIKSLWAVTVVATIVILFVALYW.

3 consecutive transmembrane segments (helical) span residues 30–50 (EGTAVPAVWFSIELIFGLFAL), 63–83 (FLQNPVIVIINLITLAAALLH), and 109–129 (IIKSLWAVTVVATIVILFVAL).

The protein belongs to the FrdC family. Part of an enzyme complex containing four subunits: a flavoprotein (FrdA), an iron-sulfur protein (FrdB), and two hydrophobic anchor proteins (FrdC and FrdD).

Its subcellular location is the cell inner membrane. Two distinct, membrane-bound, FAD-containing enzymes are responsible for the catalysis of fumarate and succinate interconversion; fumarate reductase is used in anaerobic growth, and succinate dehydrogenase is used in aerobic growth. Anchors the catalytic components of the fumarate reductase complex to the cell inner membrane, binds quinones. The chain is Fumarate reductase subunit C from Shigella boydii serotype 4 (strain Sb227).